The chain runs to 106 residues: NADH-quinone oxidoreductase subunit K (106 aa).

The next 3 helical transmembrane spans lie at 8 to 28 (IGIE…VFGV), 35 to 55 (IIVF…FVAF), and 66 to 86 (VFVF…LAIL).

The protein belongs to the complex I subunit 4L family. NDH-1 is composed of 14 different subunits. Subunits NuoA, H, J, K, L, M, N constitute the membrane sector of the complex.

The protein resides in the cell inner membrane. The catalysed reaction is a quinone + NADH + 5 H(+)(in) = a quinol + NAD(+) + 4 H(+)(out). Its function is as follows. NDH-1 shuttles electrons from NADH, via FMN and iron-sulfur (Fe-S) centers, to quinones in the respiratory chain. The immediate electron acceptor for the enzyme in this species is believed to be a menaquinone. Couples the redox reaction to proton translocation (for every two electrons transferred, four hydrogen ions are translocated across the cytoplasmic membrane), and thus conserves the redox energy in a proton gradient. The chain is NADH-quinone oxidoreductase subunit K from Flavobacterium johnsoniae (strain ATCC 17061 / DSM 2064 / JCM 8514 / BCRC 14874 / CCUG 350202 / NBRC 14942 / NCIMB 11054 / UW101) (Cytophaga johnsonae).